Consider the following 98-residue polypeptide: Putative pterin-4-alpha-carbinolamine dehydratase (98 aa).

The protein belongs to the pterin-4-alpha-carbinolamine dehydratase family.

The catalysed reaction is (4aS,6R)-4a-hydroxy-L-erythro-5,6,7,8-tetrahydrobiopterin = (6R)-L-erythro-6,7-dihydrobiopterin + H2O. The protein is Putative pterin-4-alpha-carbinolamine dehydratase of Chelativorans sp. (strain BNC1).